A 475-amino-acid polypeptide reads, in one-letter code: Ribulose bisphosphate carboxylase large chain (475 aa).

The propeptide occupies 1–2; that stretch reads MS. Position 3 is an N-acetylproline (proline 3). Lysine 14 carries the post-translational modification N6,N6,N6-trimethyllysine. 2 residues coordinate substrate: asparagine 123 and threonine 173. The active-site Proton acceptor is lysine 175. A substrate-binding site is contributed by lysine 177. Residues lysine 201, aspartate 203, and glutamate 204 each coordinate Mg(2+). Lysine 201 bears the N6-carboxylysine mark. Histidine 294 acts as the Proton acceptor in catalysis. The substrate site is built by arginine 295, histidine 327, and serine 379.

The protein belongs to the RuBisCO large chain family. Type I subfamily. As to quaternary structure, heterohexadecamer of 8 large chains and 8 small chains; disulfide-linked. The disulfide link is formed within the large subunit homodimers. It depends on Mg(2+) as a cofactor. In terms of processing, the disulfide bond which can form in the large chain dimeric partners within the hexadecamer appears to be associated with oxidative stress and protein turnover.

The protein localises to the plastid. The protein resides in the chloroplast. It carries out the reaction 2 (2R)-3-phosphoglycerate + 2 H(+) = D-ribulose 1,5-bisphosphate + CO2 + H2O. The catalysed reaction is D-ribulose 1,5-bisphosphate + O2 = 2-phosphoglycolate + (2R)-3-phosphoglycerate + 2 H(+). In terms of biological role, ruBisCO catalyzes two reactions: the carboxylation of D-ribulose 1,5-bisphosphate, the primary event in carbon dioxide fixation, as well as the oxidative fragmentation of the pentose substrate in the photorespiration process. Both reactions occur simultaneously and in competition at the same active site. This is Ribulose bisphosphate carboxylase large chain from Pseudolarix amabilis (Golden larch).